A 322-amino-acid chain; its full sequence is Probable arabinan endo-1,5-alpha-L-arabinosidase A (322 aa).

Residues 1 to 19 (MYLPTLAASASLLVGVAHG) form the signal peptide. The Proton acceptor role is filled by aspartate 34. The active-site Proton donor is glutamate 201.

This sequence belongs to the glycosyl hydrolase 43 family.

The protein localises to the secreted. It carries out the reaction Endohydrolysis of (1-&gt;5)-alpha-arabinofuranosidic linkages in (1-&gt;5)-arabinans.. Its pathway is glycan metabolism; L-arabinan degradation. Its function is as follows. Endo-1,5-alpha-L-arabinanase involved in degradation of pectin. Its preferred substrate is linear 1,5-alpha-L-arabinan. This chain is Probable arabinan endo-1,5-alpha-L-arabinosidase A (abnA), found in Emericella nidulans (strain FGSC A4 / ATCC 38163 / CBS 112.46 / NRRL 194 / M139) (Aspergillus nidulans).